We begin with the raw amino-acid sequence, 139 residues long: MGMLNEFKAFAVKGNVVDMAVGIIIGAAFGKIVSSFVGDVIMPPLGLLIGGVDFSDLAITLKAAEGDVPAVVLAYGKFIQTVIDFVIVAFAIFMGVKAINKLKREEAVAPTTPPVPSAEETLLTEIRDLLKTQNQNRLP.

Helical transmembrane passes span 9 to 29 and 79 to 99; these read AFAV…GAAF and IQTV…VKAI.

It belongs to the MscL family. As to quaternary structure, homopentamer.

The protein resides in the cell inner membrane. In terms of biological role, channel that opens in response to stretch forces in the membrane lipid bilayer. May participate in the regulation of osmotic pressure changes within the cell. The sequence is that of Large-conductance mechanosensitive channel from Pseudomonas putida (strain ATCC 47054 / DSM 6125 / CFBP 8728 / NCIMB 11950 / KT2440).